We begin with the raw amino-acid sequence, 478 residues long: Cytochrome c-552 (478 aa).

The first 26 residues, 1-26, serve as a signal peptide directing secretion; sequence MARTILRARRFFSLILPFFFISSVYA. Histidine 94 contributes to the heme c binding site. Heme-binding residues include cysteine 122, cysteine 125, and lysine 126. Residues cysteine 160, cysteine 163, histidine 164, cysteine 209, cysteine 212, and histidine 213 each coordinate heme c. Glutamate 215, tyrosine 216, lysine 261, and glutamine 263 together coordinate Ca(2+). Tyrosine 216 is a binding site for substrate. Histidine 264 is a binding site for substrate. Residues histidine 275, cysteine 282, cysteine 285, histidine 286, histidine 301, cysteine 314, cysteine 317, histidine 318, and histidine 393 each coordinate heme c.

It belongs to the cytochrome c-552 family. The cofactor is Ca(2+). Requires heme c as cofactor.

It localises to the periplasm. It catalyses the reaction 6 Fe(III)-[cytochrome c] + NH4(+) + 2 H2O = 6 Fe(II)-[cytochrome c] + nitrite + 8 H(+). Its pathway is nitrogen metabolism; nitrate reduction (assimilation). In terms of biological role, catalyzes the reduction of nitrite to ammonia, consuming six electrons in the process. The polypeptide is Cytochrome c-552 (Citrobacter koseri (strain ATCC BAA-895 / CDC 4225-83 / SGSC4696)).